The primary structure comprises 300 residues: 11-beta-hydroxysteroid dehydrogenase 1 (300 aa).

The Cytoplasmic segment spans residues 1–7 (MAFLKKY). The helical; Signal-anchor for type II membrane protein transmembrane segment at 8-24 (LLTILMVFLAYYYYSAN) threads the bilayer. Residues 25 to 300 (EKFRPEMLQG…SNEKLYGRWA (276 aa)) are Lumenal-facing. NADP(+) is bound by residues 41 to 67 (GASK…TARS), 92 to 93 (SM), and 119 to 123 (NHVLY). Serine 170 serves as a coordination point for substrate. Residue tyrosine 183 is the Proton acceptor of the active site. NADP(+) is bound at residue 183–187 (YSASK). Residue asparagine 207 is glycosylated (N-linked (GlcNAc...) asparagine). NADP(+) is bound at residue 218 to 222 (IDTET).

It belongs to the short-chain dehydrogenases/reductases (SDR) family. Homodimer. In terms of tissue distribution, widely expressed in all peripheral tissues, with highest expression in liver, followed by kidney and lung, and very low expression in heart, lung, spleen, stomach, small intestine, colon, skin, skeletal muscle, and ovary.

Its subcellular location is the endoplasmic reticulum membrane. The enzyme catalyses an 11beta-hydroxysteroid + NADP(+) = an 11-oxosteroid + NADPH + H(+). The catalysed reaction is cortisone + NADPH + H(+) = cortisol + NADP(+). It catalyses the reaction corticosterone + NADP(+) = 11-dehydrocorticosterone + NADPH + H(+). It carries out the reaction a 7beta-hydroxysteroid + NADP(+) = a 7-oxosteroid + NADPH + H(+). The enzyme catalyses 7-oxocholesterol + NADPH + H(+) = 7beta-hydroxycholesterol + NADP(+). The catalysed reaction is chenodeoxycholate + NADP(+) = 7-oxolithocholate + NADPH + H(+). It catalyses the reaction 7-oxolithocholate + NADPH + H(+) = ursodeoxycholate + NADP(+). It carries out the reaction glycochenodeoxycholate + NADP(+) = 7-oxoglycolithocholate + NADPH + H(+). The enzyme catalyses taurochenodeoxycholate + NADP(+) = 7-oxotaurolithocholate + NADPH + H(+). The catalysed reaction is tauroursodeoxycholate + NADP(+) = 7-oxotaurolithocholate + NADPH + H(+). It catalyses the reaction glycoursodeoxycholate + NADP(+) = 7-oxoglycolithocholate + NADPH + H(+). It carries out the reaction 7-oxopregnenolone + NADPH + H(+) = 7beta-hydroxypregnenolone + NADP(+). The enzyme catalyses 3beta,7alpha-dihydroxyandrost-5-en-17-one + NADP(+) = 3beta-hydroxy-5-androstene-7,17-dione + NADPH + H(+). The catalysed reaction is 3beta-hydroxy-5-androstene-7,17-dione + NADPH + H(+) = 3beta,7beta-dihydroxyandrost-5-en-17-one + NADP(+). It catalyses the reaction 3beta-hydroxy-5alpha-androstane-7,17-dione + NADPH + H(+) = 3beta,7beta-dihydroxy-5alpha-androstan-17-one + NADP(+). Functionally, controls the reversible conversion of biologically active glucocorticoids such as cortisone to cortisol, and 11-dehydrocorticosterone to corticosterone in the presence of NADP(H). Participates in the corticosteroid receptor-mediated anti-inflammatory response, as well as metabolic and homeostatic processes. Bidirectional in vitro, predominantly functions as a reductase in vivo, thereby increasing the concentration of active glucocorticoids. It has broad substrate specificity, besides glucocorticoids, it accepts other steroid and sterol substrates. Interconverts 7-oxo- and 7-hydroxy-neurosteroids such as 7-oxopregnenolone and 7beta-hydroxypregnenolone, 7-oxodehydroepiandrosterone (3beta-hydroxy-5-androstene-7,17-dione) and 7beta-hydroxydehydroepiandrosterone (3beta,7beta-dihydroxyandrost-5-en-17-one), among others. Catalyzes the stereo-specific conversion of the major dietary oxysterol, 7-ketocholesterol (7-oxocholesterol), into the more polar 7-beta-hydroxycholesterol metabolite. 7-oxocholesterol is one of the most important oxysterols, it participates in several events such as induction of apoptosis, accumulation in atherosclerotic lesions, lipid peroxidation, and induction of foam cell formation. Mediates the 7-oxo reduction of 7-oxolithocholate mainly to chenodeoxycholate, and to a lesser extent to ursodeoxycholate, both in its free form and when conjugated to glycine or taurine, providing a link between glucocorticoid activation and bile acid metabolism. Catalyzes the synthesis of 7-beta-25-dihydroxycholesterol from 7-oxo-25-hydroxycholesterol in vitro, which acts as a ligand for the G-protein-coupled receptor (GPCR) Epstein-Barr virus-induced gene 2 (EBI2) and may thereby regulate immune cell migration. The protein is 11-beta-hydroxysteroid dehydrogenase 1 (HSD11B1) of Cavia porcellus (Guinea pig).